The chain runs to 659 residues: Homeobox protein slou (659 aa).

A compositionally biased stretch (polar residues) spans methionine 1–alanine 21. 6 disordered regions span residues methionine 1–lysine 63, methionine 94–serine 152, alanine 198–serine 298, threonine 316–arginine 349, glutamine 376–alanine 440, and proline 455–alanine 548. Composition is skewed to low complexity over residues serine 27–serine 51, serine 95–leucine 108, and histidine 120–threonine 135. Residues arginine 136–serine 152 are compositionally biased toward polar residues. The segment covering histidine 201–proline 232 has biased composition (basic residues). Repeat copies occupy residues histidine 221–proline 222, histidine 223–proline 224, histidine 225–proline 226, histidine 227–proline 228, histidine 229–proline 230, histidine 231–proline 232, and histidine 233–proline 234. Positions histidine 221 to proline 234 are 7 X 2 AA tandem repeats of H-P. Composition is skewed to pro residues over residues proline 250–serine 263 and proline 275–serine 286. Low complexity-rich tracts occupy residues glutamine 287–serine 298 and threonine 316–serine 347. Positions serine 388–asparagine 401 are enriched in acidic residues. Positions arginine 417–serine 435 are enriched in low complexity. 2 stretches are compositionally biased toward acidic residues: residues arginine 478–glutamate 492 and asparagine 500–serine 519. Gly residues predominate over residues serine 528–serine 543. A DNA-binding region (homeobox) is located at residues proline 545 to asparagine 604.

The protein belongs to the NK-1 homeobox family. As to expression, mesodermal precursor cells of distinct muscles during embryogenesis, a subset of neuronal cells of the CNS and their precursors and also in cells of a small region of the midgut.

The protein resides in the nucleus. In terms of biological role, may play a role in specifying the identity of particular somatic muscles and neurons of the CNS. In Drosophila melanogaster (Fruit fly), this protein is Homeobox protein slou (slou).